The chain runs to 342 residues: 4-hydroxy-3-methylbut-2-enyl diphosphate reductase (342 aa).

C47 lines the [4Fe-4S] cluster pocket. Residues H78 and H111 each contribute to the (2E)-4-hydroxy-3-methylbut-2-enyl diphosphate site. The dimethylallyl diphosphate site is built by H78 and H111. 2 residues coordinate isopentenyl diphosphate: H78 and H111. Residue C133 participates in [4Fe-4S] cluster binding. Residue H161 participates in (2E)-4-hydroxy-3-methylbut-2-enyl diphosphate binding. H161 serves as a coordination point for dimethylallyl diphosphate. H161 contributes to the isopentenyl diphosphate binding site. E163 acts as the Proton donor in catalysis. (2E)-4-hydroxy-3-methylbut-2-enyl diphosphate is bound at residue T201. C231 contributes to the [4Fe-4S] cluster binding site. Residues S259, S260, N261, and S303 each coordinate (2E)-4-hydroxy-3-methylbut-2-enyl diphosphate. Dimethylallyl diphosphate is bound by residues S259, S260, N261, and S303. Residues S259, S260, N261, and S303 each coordinate isopentenyl diphosphate.

The protein belongs to the IspH family. Requires [4Fe-4S] cluster as cofactor.

The enzyme catalyses isopentenyl diphosphate + 2 oxidized [2Fe-2S]-[ferredoxin] + H2O = (2E)-4-hydroxy-3-methylbut-2-enyl diphosphate + 2 reduced [2Fe-2S]-[ferredoxin] + 2 H(+). It catalyses the reaction dimethylallyl diphosphate + 2 oxidized [2Fe-2S]-[ferredoxin] + H2O = (2E)-4-hydroxy-3-methylbut-2-enyl diphosphate + 2 reduced [2Fe-2S]-[ferredoxin] + 2 H(+). It participates in isoprenoid biosynthesis; dimethylallyl diphosphate biosynthesis; dimethylallyl diphosphate from (2E)-4-hydroxy-3-methylbutenyl diphosphate: step 1/1. It functions in the pathway isoprenoid biosynthesis; isopentenyl diphosphate biosynthesis via DXP pathway; isopentenyl diphosphate from 1-deoxy-D-xylulose 5-phosphate: step 6/6. Functionally, catalyzes the conversion of 1-hydroxy-2-methyl-2-(E)-butenyl 4-diphosphate (HMBPP) into a mixture of isopentenyl diphosphate (IPP) and dimethylallyl diphosphate (DMAPP). Acts in the terminal step of the DOXP/MEP pathway for isoprenoid precursor biosynthesis. The protein is 4-hydroxy-3-methylbut-2-enyl diphosphate reductase of Anaplasma marginale (strain Florida).